Reading from the N-terminus, the 298-residue chain is 4-diphosphocytidyl-2-C-methyl-D-erythritol kinase (298 aa).

The active site involves Lys25. 109–119 (PVGGGFGGGSS) contacts ATP. Asp151 is an active-site residue.

The protein belongs to the GHMP kinase family. IspE subfamily.

The catalysed reaction is 4-CDP-2-C-methyl-D-erythritol + ATP = 4-CDP-2-C-methyl-D-erythritol 2-phosphate + ADP + H(+). The protein operates within isoprenoid biosynthesis; isopentenyl diphosphate biosynthesis via DXP pathway; isopentenyl diphosphate from 1-deoxy-D-xylulose 5-phosphate: step 3/6. In terms of biological role, catalyzes the phosphorylation of the position 2 hydroxy group of 4-diphosphocytidyl-2C-methyl-D-erythritol. This is 4-diphosphocytidyl-2-C-methyl-D-erythritol kinase from Xylella fastidiosa (strain 9a5c).